A 359-amino-acid polypeptide reads, in one-letter code: DNA replication and repair protein RecF (359 aa).

30–37 (GPNGSGKT) lines the ATP pocket.

The protein belongs to the RecF family.

It is found in the cytoplasm. Its function is as follows. The RecF protein is involved in DNA metabolism; it is required for DNA replication and normal SOS inducibility. RecF binds preferentially to single-stranded, linear DNA. It also seems to bind ATP. The chain is DNA replication and repair protein RecF from Aliivibrio fischeri (strain MJ11) (Vibrio fischeri).